A 492-amino-acid polypeptide reads, in one-letter code: Bifunctional protein GlmU (492 aa).

The pyrophosphorylase stretch occupies residues 1 to 241 (MTFRGDTAVL…NALVAGVNNR (241 aa)). UDP-N-acetyl-alpha-D-glucosamine is bound by residues 12–15 (LAAG), Lys26, Gln83, 88–89 (GT), 112–114 (SGD), Gly151, Glu166, Asn181, and Asn239. Asp114 lines the Mg(2+) pocket. Position 239 (Asn239) interacts with Mg(2+). Residues 242-262 (VQLAELSAELNRRIVATHQVA) form a linker region. The tract at residues 263–492 (GVTIIDPATT…KQSQQKSEPD (230 aa)) is N-acetyltransferase. UDP-N-acetyl-alpha-D-glucosamine-binding residues include Arg344 and Lys362. Residue His374 is the Proton acceptor of the active site. Tyr377 and Asn388 together coordinate UDP-N-acetyl-alpha-D-glucosamine. Residues Ala391, 397–398 (NY), Ser416, and Ala434 contribute to the acetyl-CoA site. Residues 461–492 (VQRKRPGSAAAQAAEKASTRTGKQSQQKSEPD) form a disordered region. Over residues 479 to 492 (TRTGKQSQQKSEPD) the composition is skewed to polar residues.

The protein in the N-terminal section; belongs to the N-acetylglucosamine-1-phosphate uridyltransferase family. It in the C-terminal section; belongs to the transferase hexapeptide repeat family. In terms of assembly, homotrimer. Mg(2+) serves as cofactor.

It localises to the cytoplasm. The catalysed reaction is alpha-D-glucosamine 1-phosphate + acetyl-CoA = N-acetyl-alpha-D-glucosamine 1-phosphate + CoA + H(+). It catalyses the reaction N-acetyl-alpha-D-glucosamine 1-phosphate + UTP + H(+) = UDP-N-acetyl-alpha-D-glucosamine + diphosphate. It functions in the pathway nucleotide-sugar biosynthesis; UDP-N-acetyl-alpha-D-glucosamine biosynthesis; N-acetyl-alpha-D-glucosamine 1-phosphate from alpha-D-glucosamine 6-phosphate (route II): step 2/2. The protein operates within nucleotide-sugar biosynthesis; UDP-N-acetyl-alpha-D-glucosamine biosynthesis; UDP-N-acetyl-alpha-D-glucosamine from N-acetyl-alpha-D-glucosamine 1-phosphate: step 1/1. It participates in bacterial outer membrane biogenesis; LPS lipid A biosynthesis. Its function is as follows. Catalyzes the last two sequential reactions in the de novo biosynthetic pathway for UDP-N-acetylglucosamine (UDP-GlcNAc). The C-terminal domain catalyzes the transfer of acetyl group from acetyl coenzyme A to glucosamine-1-phosphate (GlcN-1-P) to produce N-acetylglucosamine-1-phosphate (GlcNAc-1-P), which is converted into UDP-GlcNAc by the transfer of uridine 5-monophosphate (from uridine 5-triphosphate), a reaction catalyzed by the N-terminal domain. The polypeptide is Bifunctional protein GlmU (Mycobacterium leprae (strain Br4923)).